Reading from the N-terminus, the 211-residue chain is Peroxiredoxin (211 aa).

One can recognise a Thioredoxin domain in the interval 2–156 (PLLGDDFPEL…ILRAVKVLQI (155 aa)). C44 (cysteine sulfenic acid (-SOH) intermediate) is an active-site residue. R119 is a substrate binding site. C199 and C205 are disulfide-bonded.

This sequence belongs to the peroxiredoxin family. Prx6 subfamily. In terms of assembly, homodecamer. Pentamer of dimers that assemble into a ring structure.

The protein localises to the cytoplasm. The enzyme catalyses a hydroperoxide + [thioredoxin]-dithiol = an alcohol + [thioredoxin]-disulfide + H2O. In terms of biological role, thiol-specific peroxidase that catalyzes the reduction of hydrogen peroxide and organic hydroperoxides to water and alcohols, respectively. Plays a role in cell protection against oxidative stress by detoxifying peroxides. The chain is Peroxiredoxin from Chlorobaculum tepidum (strain ATCC 49652 / DSM 12025 / NBRC 103806 / TLS) (Chlorobium tepidum).